Here is a 691-residue protein sequence, read N- to C-terminus: Elongation factor G (691 aa).

The 275-residue stretch at 8-282 (ERVRNIGIAA…AVVDYLPAPI (275 aa)) folds into the tr-type G domain. Residues 17–24 (AHIDAGKT), 81–85 (DTPGH), and 135–138 (NKMD) each bind GTP.

The protein belongs to the TRAFAC class translation factor GTPase superfamily. Classic translation factor GTPase family. EF-G/EF-2 subfamily.

The protein localises to the cytoplasm. Catalyzes the GTP-dependent ribosomal translocation step during translation elongation. During this step, the ribosome changes from the pre-translocational (PRE) to the post-translocational (POST) state as the newly formed A-site-bound peptidyl-tRNA and P-site-bound deacylated tRNA move to the P and E sites, respectively. Catalyzes the coordinated movement of the two tRNA molecules, the mRNA and conformational changes in the ribosome. This chain is Elongation factor G, found in Prochlorococcus marinus subsp. pastoris (strain CCMP1986 / NIES-2087 / MED4).